We begin with the raw amino-acid sequence, 189 residues long: Peptidyl-tRNA hydrolase (189 aa).

Residue Tyr-14 coordinates tRNA. His-19 serves as the catalytic Proton acceptor. Residues Phe-64, Asn-66, and Asn-112 each coordinate tRNA.

Belongs to the PTH family. As to quaternary structure, monomer.

It is found in the cytoplasm. The enzyme catalyses an N-acyl-L-alpha-aminoacyl-tRNA + H2O = an N-acyl-L-amino acid + a tRNA + H(+). Functionally, hydrolyzes ribosome-free peptidyl-tRNAs (with 1 or more amino acids incorporated), which drop off the ribosome during protein synthesis, or as a result of ribosome stalling. In terms of biological role, catalyzes the release of premature peptidyl moieties from peptidyl-tRNA molecules trapped in stalled 50S ribosomal subunits, and thus maintains levels of free tRNAs and 50S ribosomes. The chain is Peptidyl-tRNA hydrolase from Sphingopyxis alaskensis (strain DSM 13593 / LMG 18877 / RB2256) (Sphingomonas alaskensis).